Here is a 206-residue protein sequence, read N- to C-terminus: Urease accessory protein UreG (206 aa).

13 to 20 lines the GTP pocket; that stretch reads GPVGSGKT.

Belongs to the SIMIBI class G3E GTPase family. UreG subfamily. As to quaternary structure, homodimer. UreD, UreF and UreG form a complex that acts as a GTP-hydrolysis-dependent molecular chaperone, activating the urease apoprotein by helping to assemble the nickel containing metallocenter of UreC. The UreE protein probably delivers the nickel.

The protein localises to the cytoplasm. Its function is as follows. Facilitates the functional incorporation of the urease nickel metallocenter. This process requires GTP hydrolysis, probably effectuated by UreG. In Haloquadratum walsbyi (strain DSM 16790 / HBSQ001), this protein is Urease accessory protein UreG.